Reading from the N-terminus, the 382-residue chain is D-galactonate dehydratase (382 aa).

Aspartate 183 contacts Mg(2+). Catalysis depends on histidine 185, which acts as the Proton donor. Mg(2+) contacts are provided by glutamate 209 and glutamate 235. Histidine 285 acts as the Proton acceptor in catalysis.

The protein belongs to the mandelate racemase/muconate lactonizing enzyme family. GalD subfamily. Mg(2+) is required as a cofactor.

It catalyses the reaction D-galactonate = 2-dehydro-3-deoxy-D-galactonate + H2O. Its pathway is carbohydrate acid metabolism; D-galactonate degradation; D-glyceraldehyde 3-phosphate and pyruvate from D-galactonate: step 1/3. In terms of biological role, catalyzes the dehydration of D-galactonate to 2-keto-3-deoxy-D-galactonate. In Verminephrobacter eiseniae (strain EF01-2), this protein is D-galactonate dehydratase.